The primary structure comprises 294 residues: Metallophosphoesterase MPPED2 (294 aa).

5 residues coordinate Mn(2+): aspartate 65, histidine 67, aspartate 86, asparagine 117, and histidine 213. Asparagine 117–histidine 118 lines the GMP pocket. GMP is bound by residues lysine 225–glutamate 226 and glycine 252–glutamate 255. Histidine 254 is a binding site for Mn(2+).

Belongs to the UPF0046 family. Homodimer. The cofactor is Mn(2+). It depends on Co(2+) as a cofactor.

Inhibited by nmolar levels of AMP and GMP. Functionally, displays low metallophosphoesterase activity (in vitro). May play a role in the development of the nervous system. The polypeptide is Metallophosphoesterase MPPED2 (Mpped2) (Mus musculus (Mouse)).